The sequence spans 243 residues: MAFTFKQFHIDDHGCGMPVSTDGVLLGAWAPLSKAENLLDIGAGSGLLSLMAAQRSEAQITAVELDDTAFHACNKNFIASKWQSRLNLVYASVQEFCNQHTDGNNAQFDHIICNPPYFKGGTQSSNRLRAQARHTDSLTFHALLEVITKLLAATGTASLILPSQSMTPFIEEVEKSELWMNQLTNISDSRFKAPHRHLFTLKHKATKLAEDDTVITNNLCIKEPDASYTPEMIALITGFYLKY.

Belongs to the methyltransferase superfamily. tRNA (adenine-N(6)-)-methyltransferase family.

The protein localises to the cytoplasm. It catalyses the reaction adenosine(37) in tRNA1(Val) + S-adenosyl-L-methionine = N(6)-methyladenosine(37) in tRNA1(Val) + S-adenosyl-L-homocysteine + H(+). Its function is as follows. Specifically methylates the adenine in position 37 of tRNA(1)(Val) (anticodon cmo5UAC). The chain is tRNA1(Val) (adenine(37)-N6)-methyltransferase from Shewanella woodyi (strain ATCC 51908 / MS32).